Here is a 157-residue protein sequence, read N- to C-terminus: Small ribosomal subunit protein uS7 (157 aa).

This sequence belongs to the universal ribosomal protein uS7 family. In terms of assembly, part of the 30S ribosomal subunit. Contacts proteins S9 and S11.

Functionally, one of the primary rRNA binding proteins, it binds directly to 16S rRNA where it nucleates assembly of the head domain of the 30S subunit. Is located at the subunit interface close to the decoding center, probably blocks exit of the E-site tRNA. This Phenylobacterium zucineum (strain HLK1) protein is Small ribosomal subunit protein uS7.